Reading from the N-terminus, the 421-residue chain is 3-phosphoshikimate 1-carboxyvinyltransferase (421 aa).

3-phosphoshikimate contacts are provided by Lys21, Ser22, and Arg26. Position 21 (Lys21) interacts with phosphoenolpyruvate. Phosphoenolpyruvate-binding residues include Gly93 and Arg121. 6 residues coordinate 3-phosphoshikimate: Ser166, Ser167, Gln168, Ser194, Asp310, and Lys337. Residue Gln168 coordinates phosphoenolpyruvate. Asp310 serves as the catalytic Proton acceptor. Residues Arg341, Arg382, and Lys407 each contribute to the phosphoenolpyruvate site.

It belongs to the EPSP synthase family. Monomer.

The protein localises to the cytoplasm. The enzyme catalyses 3-phosphoshikimate + phosphoenolpyruvate = 5-O-(1-carboxyvinyl)-3-phosphoshikimate + phosphate. Its pathway is metabolic intermediate biosynthesis; chorismate biosynthesis. Its function is as follows. Catalyzes the transfer of the enolpyruvyl moiety of phosphoenolpyruvate (PEP) to the 5-hydroxyl of shikimate-3-phosphate (S3P) to produce enolpyruvyl shikimate-3-phosphate and inorganic phosphate. This is 3-phosphoshikimate 1-carboxyvinyltransferase from Methanoregula boonei (strain DSM 21154 / JCM 14090 / 6A8).